The primary structure comprises 186 residues: uncharacterized protein (186 aa).

3 helical membrane-spanning segments follow: residues 43 to 63, 69 to 89, and 143 to 163; these read GAWV…HAIP, LAWT…FHWV, and WMFL…LPAV.

The protein localises to the endoplasmic reticulum membrane. This is an uncharacterized protein from Schizosaccharomyces pombe (strain 972 / ATCC 24843) (Fission yeast).